The primary structure comprises 424 residues: Myb family transcription factor RLI1 (424 aa).

The interval 144–165 (RPQKRDSGERTPLPPPSQQQHQ) is disordered. The HTH myb-type domain maps to 238 to 298 (APSKTRIRWT…HLQKYRIAKY (61 aa)). Positions 269–294 (PKGILKLMNSDGLTIYHIKSHLQKYR) form a DNA-binding region, H-T-H motif. Positions 326 to 391 (MQITEALRVQ…ELDDVVAFAA (66 aa)) form a coiled coil. The LHEQLE motif lies at 342-347 (LHEQLE).

The protein belongs to the MYB-CC family. In terms of assembly, interacts with SPX1 and SPX2 in the nucleus; these interactions prevent binding to the promoters of target genes, thus regulating negatively leaf inclination in response to phosphate (Pi) starvation. Homodimer. Interacts with PHR2 in the nucleus. In terms of tissue distribution, mostly expressed in roots and leaves blades and, to a lower extent, in leaves sheaths, culms and panicles. Localized in leaves lamina joints. Expressed equally in shoots and roots. As to expression, mostly expressed in shoots and, to a lower extent, in roots.

It localises to the nucleus. In terms of biological role, transcription factor binding to specific DNA sequences of target genes promoters, such as the motif R1BS 5'-NAKATNCN-3' and the motif P1BS 5'-GNATATNC-3' to trigger their expression. Nitrate-induced component involved in modulating phosphate (Pi) response and homeostasis together with PHR2; activates directly the expression of Pi starvation-induced (PSI) genes upon nitrate disponibility, thus triggering the nitrate-induced phosphate response (NIPR) promoting Pi uptake activity. Its function is as follows. Binds preferentially to the P1BS motif 5'-GNATATNC-3' in target genes promoters. Binds preferentially to the R1BS motif 5'-NAKATNCN-3' in target genes promoters, including several genes involved in the plant hormone signal transduction pathway. Involved in the shoot architecture; positively regulates leaf inclination by affecting lamina joint cell elongation via the direct promotion of ILI4/BU1 and BC1 genes expression, especially in response to phosphate (Pi) availability. Regulates both brassinolide (BL) biosynthesis and signaling by directly activating BL-biosynthesis and signaling genes. This is Myb family transcription factor RLI1 from Oryza sativa subsp. japonica (Rice).